We begin with the raw amino-acid sequence, 910 residues long: Protein translocase subunit SecA 1 (910 aa).

ATP is bound by residues glutamine 86, 104-108, and aspartate 512; that span reads GEGKT. Residues cysteine 894, cysteine 896, cysteine 905, and histidine 906 each contribute to the Zn(2+) site.

This sequence belongs to the SecA family. In terms of assembly, monomer and homodimer. Part of the essential Sec protein translocation apparatus which comprises SecA, SecYEG and auxiliary proteins SecDF-YajC and YidC. Requires Zn(2+) as cofactor.

The protein resides in the cell inner membrane. It is found in the cytoplasm. It carries out the reaction ATP + H2O + cellular proteinSide 1 = ADP + phosphate + cellular proteinSide 2.. Part of the Sec protein translocase complex. Interacts with the SecYEG preprotein conducting channel. Has a central role in coupling the hydrolysis of ATP to the transfer of proteins into and across the cell membrane, serving both as a receptor for the preprotein-SecB complex and as an ATP-driven molecular motor driving the stepwise translocation of polypeptide chains across the membrane. This chain is Protein translocase subunit SecA 1, found in Bordetella avium (strain 197N).